We begin with the raw amino-acid sequence, 288 residues long: Quinate/shikimate dehydrogenase (288 aa).

Substrate is bound by residues K71 and D107. NAD(+) contacts are provided by residues 132 to 135 (AGGA), 155 to 158 (NRRD), K205, 232 to 235 (CVYN), and G255.

This sequence belongs to the shikimate dehydrogenase family. In terms of assembly, homodimer.

The catalysed reaction is L-quinate + NAD(+) = 3-dehydroquinate + NADH + H(+). It carries out the reaction L-quinate + NADP(+) = 3-dehydroquinate + NADPH + H(+). The enzyme catalyses shikimate + NADP(+) = 3-dehydroshikimate + NADPH + H(+). It catalyses the reaction shikimate + NAD(+) = 3-dehydroshikimate + NADH + H(+). It functions in the pathway metabolic intermediate biosynthesis; chorismate biosynthesis; chorismate from D-erythrose 4-phosphate and phosphoenolpyruvate: step 4/7. The actual biological function of YdiB remains unclear, nor is it known whether 3-dehydroshikimate or quinate represents the natural substrate. Catalyzes the reversible NAD-dependent reduction of both 3-dehydroshikimate (DHSA) and 3-dehydroquinate to yield shikimate (SA) and quinate, respectively. It can use both NAD or NADP for catalysis, however it has higher catalytic efficiency with NAD. The polypeptide is Quinate/shikimate dehydrogenase (Escherichia coli O7:K1 (strain IAI39 / ExPEC)).